A 661-amino-acid chain; its full sequence is UvrABC system protein B (661 aa).

The Helicase ATP-binding domain occupies 25-178 (EGILKGEKFQ…DEVIRDLIRM (154 aa)). Position 38 to 45 (38 to 45 (GVTGSGKT)) interacts with ATP. The Beta-hairpin motif lies at 91–114 (YYDYYQPEAYIPETDTYIEKDSSI). The Helicase C-terminal domain maps to 429 to 591 (QIDHLIGEIR…IVPQTVRKGI (163 aa)). One can recognise a UVR domain in the interval 625-660 (EEYIKELEQEMKKLAIELEFEKAAKVRDKIFELKKL).

The protein belongs to the UvrB family. Forms a heterotetramer with UvrA during the search for lesions. Interacts with UvrC in an incision complex.

The protein resides in the cytoplasm. Its function is as follows. The UvrABC repair system catalyzes the recognition and processing of DNA lesions. A damage recognition complex composed of 2 UvrA and 2 UvrB subunits scans DNA for abnormalities. Upon binding of the UvrA(2)B(2) complex to a putative damaged site, the DNA wraps around one UvrB monomer. DNA wrap is dependent on ATP binding by UvrB and probably causes local melting of the DNA helix, facilitating insertion of UvrB beta-hairpin between the DNA strands. Then UvrB probes one DNA strand for the presence of a lesion. If a lesion is found the UvrA subunits dissociate and the UvrB-DNA preincision complex is formed. This complex is subsequently bound by UvrC and the second UvrB is released. If no lesion is found, the DNA wraps around the other UvrB subunit that will check the other stand for damage. The protein is UvrABC system protein B of Caldicellulosiruptor bescii (strain ATCC BAA-1888 / DSM 6725 / KCTC 15123 / Z-1320) (Anaerocellum thermophilum).